Here is a 599-residue protein sequence, read N- to C-terminus: Elongation factor 4 (599 aa).

Positions 2–184 (KNIRNFSIIA…EIVAKIPAPK (183 aa)) constitute a tr-type G domain. GTP contacts are provided by residues 14–19 (DHGKST) and 131–134 (NKID).

The protein belongs to the TRAFAC class translation factor GTPase superfamily. Classic translation factor GTPase family. LepA subfamily.

It is found in the cell inner membrane. It carries out the reaction GTP + H2O = GDP + phosphate + H(+). Functionally, required for accurate and efficient protein synthesis under certain stress conditions. May act as a fidelity factor of the translation reaction, by catalyzing a one-codon backward translocation of tRNAs on improperly translocated ribosomes. Back-translocation proceeds from a post-translocation (POST) complex to a pre-translocation (PRE) complex, thus giving elongation factor G a second chance to translocate the tRNAs correctly. Binds to ribosomes in a GTP-dependent manner. The polypeptide is Elongation factor 4 (Mannheimia succiniciproducens (strain KCTC 0769BP / MBEL55E)).